A 749-amino-acid chain; its full sequence is Signal transducer and activator of transcription 4 (749 aa).

The SH2 domain occupies 570-665 (WIDGYIMGFV…ENPLKYLYPD (96 aa)). Lys668 bears the N6-acetyllysine mark. The residue at position 694 (Tyr694) is a Phosphotyrosine; by JAK. Ser722 carries the phosphoserine modification.

Belongs to the transcription factor STAT family. Forms a homodimer or a heterodimer with a related family member. Interacts with ARL2BP. Interacts with STAT1. Interacts with JUN; this complex efficiently interacts with the AP-1-related sequence of the IFN-gamma promoter. Acetylation at Lys-668 is required for JAK2-mediated phosphorylation and activation of STAT4. In terms of processing, tyrosine phosphorylated upon IL12 and IFN-alpha activation, but not by IFN-gamma in T-lymphocytes and NK cells. Serine phosphorylation is required for maximal transcriptional activity but not for DNA binding. Phosphorylation by MAP2K6 at Ser-722 is required for full transcriptional activity induced by IL12. However this serine phosphorylation is not required for cell proliferation although critical for IFN-gamma production. In terms of tissue distribution, expression is restricted to testis, thymus, and spleen.

The protein localises to the cytoplasm. It is found in the nucleus. Functionally, transcriptional regulator mainly expressed in hematopoietic cells that plays a critical role in cellular growth, differentiation and immune response. Plays a key role in the differentiation of T-helper 1 cells and the production of interferon-gamma. Also participates in multiple neutrophil functions including chemotaxis and production of the neutrophil extracellular traps. After IL12 binding to its receptor IL12RB2, STAT4 interacts with the intracellular domain of IL12RB2 and becomes tyrosine phosphorylated. Phosphorylated STAT4 then homodimerizes and migrates to the nucleus where it can recognize STAT target sequences present in IL12 responsive genes. Although IL12 appears to be the predominant activating signal, STAT4 can also be phosphorylated and activated in response to IFN-gamma stimulation via JAK1 and TYK2 and in response to different interleukins including IL23, IL2 and IL35. Transcription activation of IFN-gamma gene is mediated by interaction with JUN that forms a complex that efficiently interacts with the AP-1-related sequence of the IFN-gamma promoter. In response to IFN-alpha/beta signaling, acts as a transcriptional repressor and suppresses IL5 and IL13 mRNA expression during response to T-cell receptor (TCR) activation. This chain is Signal transducer and activator of transcription 4 (Stat4), found in Mus musculus (Mouse).